We begin with the raw amino-acid sequence, 1187 residues long: DNA excision repair protein CSB (1187 aa).

A compositionally biased stretch (polar residues) spans 31–43 (QATTDPADSSGPT). 4 disordered regions span residues 31–53 (QATT…PDDA), 75–102 (IKGA…HHGA), 217–242 (KRVE…MEAS), and 265–351 (DSES…EGSD). Composition is skewed to basic and acidic residues over residues 92 to 101 (KGKDQPDHHG) and 217 to 230 (KRVE…RQDD). Positions 300-319 (KRPRNKTKRPLPGKKWRKAN) are enriched in basic residues. A compositionally biased stretch (acidic residues) spans 339–351 (SDDDEDQVTEGSD). The region spanning 384-580 (WELHCQRAGG…WSLFDFVFPG (197 aa)) is the Helicase ATP-binding domain. 397–404 (DEMGLGKT) contacts ATP. The tract at residues 457–480 (SSSKKSKRSSDSDSEASWDSDQEE) is disordered. Acidic residues predominate over residues 468–480 (SDSEASWDSDQEE). A DEGH box motif is present at residues 531–534 (DEGH). The Helicase C-terminal domain maps to 716–876 (KVVEQVLKVW…RRFFKARDMK (161 aa)). Disordered regions lie at residues 916–945 (LYAA…HCPD) and 1095–1116 (GSAS…SSTR). Low complexity predominate over residues 918 to 933 (AASATPTTSGTEPSSS).

It belongs to the SNF2/RAD54 helicase family. In terms of assembly, homodimer. Binds DNA. As to expression, expressed in proliferating tissues. Highly expressed in shoot apical meristem (SAM). Expressed in roots, young leaves, flag leaves, and panicles. Expressed at very low levels in mature leaves.

The protein resides in the nucleus. Its function is as follows. Essential factor involved in transcription-coupled nucleotide excision repair (TCR) which allows RNA polymerase II-blocking lesions to be rapidly removed from the transcribed strand of active genes. Upon DNA-binding, it locally modifies DNA conformation by wrapping the DNA around itself, thereby modifying the interface between stalled RNA polymerase II and DNA. It is required for transcription-coupled repair complex formation. The sequence is that of DNA excision repair protein CSB from Oryza sativa subsp. japonica (Rice).